A 66-amino-acid chain; its full sequence is Beta-toxin Chui2 (66 aa).

Positions 1–66 constitute an LCN-type CS-alpha/beta domain; it reads KEGYIVNSYT…VWPLKNKTCN (66 aa). Intrachain disulfides connect cysteine 12–cysteine 65, cysteine 16–cysteine 41, cysteine 25–cysteine 46, and cysteine 29–cysteine 48. Asparagine 66 is modified (asparagine amide).

Belongs to the long (4 C-C) scorpion toxin superfamily. Sodium channel inhibitor family. Beta subfamily. As to expression, expressed by the venom gland.

The protein resides in the secreted. In terms of biological role, beta toxins bind voltage-independently at site-4 of sodium channels (Nav) and shift the voltage of activation toward more negative potentials thereby affecting sodium channel activation and promoting spontaneous and repetitive firing. In Centruroides huichol (Scorpion), this protein is Beta-toxin Chui2.